We begin with the raw amino-acid sequence, 1118 residues long: DNA mismatch repair protein MSH1, mitochondrial (1118 aa).

Glycine 768 to serine 775 is a binding site for ATP.

This sequence belongs to the DNA mismatch repair MutS family.

It is found in the mitochondrion. The protein resides in the plastid. Its subcellular location is the chloroplast. Its function is as follows. DNA mismatch repair protein specifically involved in maintenance of mitochondrial genome configuration by controlling specific rearranged portion. Functions by suppressing asymmetric recombination at some repeat pairs. The protein is DNA mismatch repair protein MSH1, mitochondrial (MSH1) of Arabidopsis thaliana (Mouse-ear cress).